A 579-amino-acid chain; its full sequence is Protein O-linked-mannose beta-1,4-N-acetylglucosaminyltransferase 2 (579 aa).

Over 1–4 (MGVG) the chain is Cytoplasmic. A helical; Signal-anchor for type II membrane protein membrane pass occupies residues 5–25 (TLLNGLLVSVVAALLWKYSKL). Over 26–579 (SEHAALLEEE…PFADVLMCRT (554 aa)) the chain is Lumenal. 3 N-linked (GlcNAc...) asparagine glycosylation sites follow: asparagine 98, asparagine 275, and asparagine 542. In terms of domain architecture, Fibronectin type-III spans 480–579 (HPGRVRDARC…PFADVLMCRT (100 aa)).

This sequence belongs to the glycosyltransferase 61 family.

It localises to the endoplasmic reticulum membrane. It catalyses the reaction 3-O-(alpha-D-mannosyl)-L-threonyl-[protein] + UDP-N-acetyl-alpha-D-glucosamine = 3-O-(N-acetyl-beta-D-glucosaminyl-(1-&gt;4)-alpha-D-mannosyl)-L-threonyl-[protein] + UDP + H(+). The protein operates within protein modification; protein glycosylation. Its function is as follows. O-linked mannose beta-1,4-N-acetylglucosaminyltransferase that transfers UDP-N-acetyl-D-glucosamine to the 4-position of the mannose to generate N-acetyl-D-glucosamine-beta-1,4-O-D-mannosylprotein. Involved in the biosynthesis of the phosphorylated O-mannosyl trisaccharide (N-acetylgalactosamine-beta-3-N-acetylglucosamine-beta-4-(phosphate-6-)mannose), a carbohydrate structure present in alpha-dystroglycan (DAG1), which is required for binding laminin G-like domain-containing extracellular proteins with high affinity. This Tetraodon nigroviridis (Spotted green pufferfish) protein is Protein O-linked-mannose beta-1,4-N-acetylglucosaminyltransferase 2 (pomgnt2).